Here is a 196-residue protein sequence, read N- to C-terminus: Imidazoleglycerol-phosphate dehydratase (196 aa).

It belongs to the imidazoleglycerol-phosphate dehydratase family.

The protein localises to the cytoplasm. The enzyme catalyses D-erythro-1-(imidazol-4-yl)glycerol 3-phosphate = 3-(imidazol-4-yl)-2-oxopropyl phosphate + H2O. The protein operates within amino-acid biosynthesis; L-histidine biosynthesis; L-histidine from 5-phospho-alpha-D-ribose 1-diphosphate: step 6/9. The polypeptide is Imidazoleglycerol-phosphate dehydratase (Nitratidesulfovibrio vulgaris (strain DSM 19637 / Miyazaki F) (Desulfovibrio vulgaris)).